The primary structure comprises 162 residues: Ribosome maturation factor RimP (162 aa).

The protein belongs to the RimP family.

It is found in the cytoplasm. In terms of biological role, required for maturation of 30S ribosomal subunits. This Streptococcus gordonii (strain Challis / ATCC 35105 / BCRC 15272 / CH1 / DL1 / V288) protein is Ribosome maturation factor RimP.